Reading from the N-terminus, the 217-residue chain is Probable transaldolase (217 aa).

The active-site Schiff-base intermediate with substrate is the Lys83.

It belongs to the transaldolase family. Type 3B subfamily.

Its subcellular location is the cytoplasm. It carries out the reaction D-sedoheptulose 7-phosphate + D-glyceraldehyde 3-phosphate = D-erythrose 4-phosphate + beta-D-fructose 6-phosphate. The protein operates within carbohydrate degradation; pentose phosphate pathway; D-glyceraldehyde 3-phosphate and beta-D-fructose 6-phosphate from D-ribose 5-phosphate and D-xylulose 5-phosphate (non-oxidative stage): step 2/3. Functionally, transaldolase is important for the balance of metabolites in the pentose-phosphate pathway. The polypeptide is Probable transaldolase (Dinoroseobacter shibae (strain DSM 16493 / NCIMB 14021 / DFL 12)).